Here is a 188-residue protein sequence, read N- to C-terminus: Ribosome-recycling factor (188 aa).

It belongs to the RRF family.

The protein resides in the cytoplasm. Its function is as follows. Responsible for the release of ribosomes from messenger RNA at the termination of protein biosynthesis. May increase the efficiency of translation by recycling ribosomes from one round of translation to another. In Gluconacetobacter diazotrophicus (strain ATCC 49037 / DSM 5601 / CCUG 37298 / CIP 103539 / LMG 7603 / PAl5), this protein is Ribosome-recycling factor.